The primary structure comprises 251 residues: MTETILSGGQIEVGEHHTTTWFGMTVNTDTVLSTAIAAAIVIALAFFLRTKVNSTGVPCGMQLFWEAITVQMRTQIESAIGMRIAPFVLPLAVTIFVFILISNWLSVLPLQYTNADGHTTEVLSSAAADINYVLALAFFVFVCYHLAGIWRRGIVGHPVAVLKGHVAFLAPINLVEEITKPISLSLRLFGNIFAGGILVTLIALFPPYIMWAPNAIWKSFDLFVGAIQAFIFSILTILYFSQAMEVEDHHD.

The next 5 membrane-spanning stretches (helical) occupy residues Thr-28–Leu-48, Ile-84–Trp-104, Ile-130–Trp-150, Ile-192–Ala-212, and Phe-220–Phe-240.

This sequence belongs to the ATPase A chain family. As to quaternary structure, F-type ATPases have 2 components, CF(1) - the catalytic core - and CF(0) - the membrane proton channel. CF(1) has five subunits: alpha(3), beta(3), gamma(1), delta(1), epsilon(1). CF(0) has three main subunits: a(1), b(2) and c(9-12). The alpha and beta chains form an alternating ring which encloses part of the gamma chain. CF(1) is attached to CF(0) by a central stalk formed by the gamma and epsilon chains, while a peripheral stalk is formed by the delta and b chains.

It is found in the cell membrane. Functionally, key component of the proton channel; it plays a direct role in the translocation of protons across the membrane. The sequence is that of ATP synthase subunit a from Mycobacterium leprae (strain TN).